Reading from the N-terminus, the 301-residue chain is Acetylglutamate kinase (301 aa).

Substrate contacts are provided by residues 68–69 (GG), Arg-90, and Asn-195.

The protein belongs to the acetylglutamate kinase family. ArgB subfamily.

It localises to the cytoplasm. The catalysed reaction is N-acetyl-L-glutamate + ATP = N-acetyl-L-glutamyl 5-phosphate + ADP. It participates in amino-acid biosynthesis; L-arginine biosynthesis; N(2)-acetyl-L-ornithine from L-glutamate: step 2/4. Catalyzes the ATP-dependent phosphorylation of N-acetyl-L-glutamate. The protein is Acetylglutamate kinase of Pseudomonas paraeruginosa (strain DSM 24068 / PA7) (Pseudomonas aeruginosa (strain PA7)).